Here is a 150-residue protein sequence, read N- to C-terminus: D-aminoacyl-tRNA deacylase (150 aa).

The short motif at 138-139 (GP) is the Gly-cisPro motif, important for rejection of L-amino acids element.

The protein belongs to the DTD family. Homodimer.

Its subcellular location is the cytoplasm. It carries out the reaction glycyl-tRNA(Ala) + H2O = tRNA(Ala) + glycine + H(+). The enzyme catalyses a D-aminoacyl-tRNA + H2O = a tRNA + a D-alpha-amino acid + H(+). An aminoacyl-tRNA editing enzyme that deacylates mischarged D-aminoacyl-tRNAs. Also deacylates mischarged glycyl-tRNA(Ala), protecting cells against glycine mischarging by AlaRS. Acts via tRNA-based rather than protein-based catalysis; rejects L-amino acids rather than detecting D-amino acids in the active site. By recycling D-aminoacyl-tRNA to D-amino acids and free tRNA molecules, this enzyme counteracts the toxicity associated with the formation of D-aminoacyl-tRNA entities in vivo and helps enforce protein L-homochirality. In Thermosipho melanesiensis (strain DSM 12029 / CIP 104789 / BI429), this protein is D-aminoacyl-tRNA deacylase.